The chain runs to 404 residues: Dual-specificity RNA methyltransferase RlmN (404 aa).

Glu118 acts as the Proton acceptor in catalysis. A Radical SAM core domain is found at 125 to 357 (VGRAGALCVS…NKAGYSSPIR (233 aa)). Cysteines 132 and 368 form a disulfide. The [4Fe-4S] cluster site is built by Cys139, Cys143, and Cys146. Residues 194–195 (GE), Ser226, 248–250 (SLH), and Asn325 each bind S-adenosyl-L-methionine. Cys368 (S-methylcysteine intermediate) is an active-site residue.

Belongs to the radical SAM superfamily. RlmN family. It depends on [4Fe-4S] cluster as a cofactor.

Its subcellular location is the cytoplasm. It carries out the reaction adenosine(2503) in 23S rRNA + 2 reduced [2Fe-2S]-[ferredoxin] + 2 S-adenosyl-L-methionine = 2-methyladenosine(2503) in 23S rRNA + 5'-deoxyadenosine + L-methionine + 2 oxidized [2Fe-2S]-[ferredoxin] + S-adenosyl-L-homocysteine. The catalysed reaction is adenosine(37) in tRNA + 2 reduced [2Fe-2S]-[ferredoxin] + 2 S-adenosyl-L-methionine = 2-methyladenosine(37) in tRNA + 5'-deoxyadenosine + L-methionine + 2 oxidized [2Fe-2S]-[ferredoxin] + S-adenosyl-L-homocysteine. Specifically methylates position 2 of adenine 2503 in 23S rRNA and position 2 of adenine 37 in tRNAs. m2A2503 modification seems to play a crucial role in the proofreading step occurring at the peptidyl transferase center and thus would serve to optimize ribosomal fidelity. This Caulobacter vibrioides (strain ATCC 19089 / CIP 103742 / CB 15) (Caulobacter crescentus) protein is Dual-specificity RNA methyltransferase RlmN.